The sequence spans 292 residues: 5,10-methylenetetrahydrofolate reductase (292 aa).

Glu-26 functions as the Proton donor/acceptor in the catalytic mechanism. An NADH-binding site is contributed by Thr-57. The FAD site is built by Tyr-58, Ala-60, His-86, Arg-116, Gly-117, Asp-118, Ala-130, Tyr-150, His-154, Ala-157, Asp-163, Asn-166, Arg-169, and Lys-170. Asp-118 lines the (6S)-5-methyl-5,6,7,8-tetrahydrofolate pocket. Gln-181 provides a ligand contact to NADH. The (6S)-5-methyl-5,6,7,8-tetrahydrofolate site is built by Gln-181, Gln-217, and Arg-277.

It belongs to the methylenetetrahydrofolate reductase family. FAD is required as a cofactor.

It catalyses the reaction (6S)-5-methyl-5,6,7,8-tetrahydrofolate + NAD(+) = (6R)-5,10-methylene-5,6,7,8-tetrahydrofolate + NADH + H(+). It participates in one-carbon metabolism; tetrahydrofolate interconversion. Its pathway is amino-acid biosynthesis; L-methionine biosynthesis via de novo pathway. Functionally, catalyzes the NADH-dependent reduction of 5,10-methylenetetrahydrofolate to 5-methyltetrahydrofolate. Is required to provide the methyl group necessary for methionine synthetase to convert homocysteine to methionine; the methyl group is given by 5-methyltetrahydrofolate. The chain is 5,10-methylenetetrahydrofolate reductase (metF) from Haemophilus influenzae (strain ATCC 51907 / DSM 11121 / KW20 / Rd).